We begin with the raw amino-acid sequence, 487 residues long: Bifunctional protein HldE (487 aa).

The ribokinase stretch occupies residues 1–329 (MLHAVETAFY…GALLTDATYE (329 aa)). Position 204-207 (204-207 (NRGE)) interacts with ATP. Residue Asp274 is part of the active site. The cytidylyltransferase stretch occupies residues 356–487 (FTNGCFDLLH…GIVQRISAQK (132 aa)).

This sequence in the N-terminal section; belongs to the carbohydrate kinase PfkB family. The protein in the C-terminal section; belongs to the cytidylyltransferase family. As to quaternary structure, homodimer.

The catalysed reaction is D-glycero-beta-D-manno-heptose 7-phosphate + ATP = D-glycero-beta-D-manno-heptose 1,7-bisphosphate + ADP + H(+). The enzyme catalyses D-glycero-beta-D-manno-heptose 1-phosphate + ATP + H(+) = ADP-D-glycero-beta-D-manno-heptose + diphosphate. Its pathway is nucleotide-sugar biosynthesis; ADP-L-glycero-beta-D-manno-heptose biosynthesis; ADP-L-glycero-beta-D-manno-heptose from D-glycero-beta-D-manno-heptose 7-phosphate: step 1/4. It participates in nucleotide-sugar biosynthesis; ADP-L-glycero-beta-D-manno-heptose biosynthesis; ADP-L-glycero-beta-D-manno-heptose from D-glycero-beta-D-manno-heptose 7-phosphate: step 3/4. Its function is as follows. Catalyzes the phosphorylation of D-glycero-D-manno-heptose 7-phosphate at the C-1 position to selectively form D-glycero-beta-D-manno-heptose-1,7-bisphosphate. Functionally, catalyzes the ADP transfer from ATP to D-glycero-beta-D-manno-heptose 1-phosphate, yielding ADP-D-glycero-beta-D-manno-heptose. This Magnetococcus marinus (strain ATCC BAA-1437 / JCM 17883 / MC-1) protein is Bifunctional protein HldE.